A 337-amino-acid chain; its full sequence is tRNA N6-adenosine threonylcarbamoyltransferase (337 aa).

Fe cation-binding residues include His-110 and His-114. Residues 133-137 (MVSGG), Asp-166, Gly-179, Asp-183, and Asn-276 contribute to the substrate site. Residue Asp-302 coordinates Fe cation.

The protein belongs to the KAE1 / TsaD family. The cofactor is Fe(2+).

It is found in the cytoplasm. The enzyme catalyses L-threonylcarbamoyladenylate + adenosine(37) in tRNA = N(6)-L-threonylcarbamoyladenosine(37) in tRNA + AMP + H(+). Its function is as follows. Required for the formation of a threonylcarbamoyl group on adenosine at position 37 (t(6)A37) in tRNAs that read codons beginning with adenine. Is involved in the transfer of the threonylcarbamoyl moiety of threonylcarbamoyl-AMP (TC-AMP) to the N6 group of A37, together with TsaE and TsaB. TsaD likely plays a direct catalytic role in this reaction. In Fervidobacterium nodosum (strain ATCC 35602 / DSM 5306 / Rt17-B1), this protein is tRNA N6-adenosine threonylcarbamoyltransferase.